A 1692-amino-acid chain; its full sequence is MEAVPRMPMIWLDLKEAGDFHFQSAVKKFVLKNYGENPEAYNEELKKLELLRQNAIRVARDFEGCSVLRKYLGQLHYLQSRVPMGSGQEAAVAVTWTEIFSGKSVSHEDIKYEQACILYNLGALHSMLGAMDKRVSEEGMKVSCTHFQCAAGAFAYLREHFPQAFSVDMSRQILTLNVNLMLGQAQECLLEKSMLDNRKSFLVARISAQVVDYYKEACRALENPDTASLLGRIQKDWKKLVQMKIYYFAAVAHLHMGKQAEEQQKFGERVAYFQSALDKLNEAIKLAKGQPDTVQDALRFAMDVIGGKYNSAKKDNDFIYHEAVPALDTLQPVKGAPLVKPLPVNPTDPAVTGPDIFAKLVPMAAHEASSLYSEEKAKLLREMLAKIEDKNEVLDQFMDSMQLDPETVDNLDAYNHIPPQLMEKCAALSVRPDTVKNLVQSMQVLSGVFTDVEASLKDIRDLLEEDELQEQKLQETLGQAGAGPGPSVAKAELAEVRREWAKYMEVHEKASFTNSELHRAMNLHVGNLRLLSGPLDQVRAALPTPALTPEDKAVLQNLKRILAKVQEMRDQRVSLEQQLRELIQKDDITASLVTTDHSEMKKLFEEQLKKYDQLKVYLEQNLAAQDNVLRALTEANVQYAAVRRVLSELDQKWNSTLQTLVASYEAYEDLMKKSQEGKDFYADLESKVATLLERAQSICRAQEAARQQLLDRELKKKAPPPRPTAPKPLLSRREEGEAVEAGDTPEELRSLPPDMMVGPRLPDPFLGTTAPLHFSPGPFPSSTGPATHYLSGPLPPGTYSGPTQLMQPRAAVPMAPATVLYPAPAYTSELGLVPRSSPQHGIVSSPYAGVGPPQPVVGLPSAPPPQLSGPELAMTVRPATTTVDSVQAPISSHTAPRPNPTPALPQPCFPVPQPVPQSVPQPQPLPVPYTYSIGTKQPLPAPYTYSIGTKQHLTGPLPQHQFPPGIPTGFPVPRTGPQAQAQPQPQPQPQPQPQPQPQPQPQPQSQSQPQPQPQPQPQRPAFGPQPTQQPLPFQHPHLFPSQAPGILPPPPPTPYHFTPQPGVLGQPPPTLHTQLYPGPSQDPLPPHSGALPFPSPGPPHPHPTLAYGPAPSPRPLGPQATPVSIRGPPPASQPTPSPHLVPSPAPSPGPGPVPSRPPTAEPPPCLRRGAAAADLLSSSPESQHGGTQPPGGGQPLLQPTKVDAAEGRRPQALRLIEQDPYEHPERLQQLQQELEAFRGQLGDAGALDAIWRELQEAQEHDARGRSIAIARCYSLKNRHQDVMPYDSNRVVLRSGKDDYINASCVEGLSPYCPPLVATQAPLPGTAADFWLMVHEQKVSVIVMLVSEAEMEKQKVARYFPTERGQPMVHGALSVALSSIRTTETHVERVLSLQFRDQSLKRSLVHLHFPTWPELGLPDSPGNLLRFIQEVHAHYLHQRPLHTPIVVHCSSGVGRTGAFALLYAAVQEVEAGNGIPELPQLVRRMRQQRKHMLQEKLHLKFCHEALVRHVEQVLQRHGVPPPGKPVASVNISQKNHLPQDSQDLVLGGDVPISSIQATIAKLSIRPLGGLDSPAASLPGLVEPPGLPPASLPESTPVPSSSPPPLSSPLPEAPQPEEEPSVPEAPSLGPPSSSLELLASLTPEAFSLDSSLRGKQRMSKQNFLQAHNGQGLRAAQPTDDPLSLLDPLWTLNKT.

Residues P8–L394 form the BRO1 domain. 2 TPR repeats span residues A250 to A283 and E374 to T407. The stretch at K552 to Y639 forms a coiled coil. Disordered regions lie at residues D711–H788, D884–Q923, and T944–P1199. Phosphothreonine is present on T744. The segment at H773–G1186 is his. Over residues F774–P785 the composition is skewed to low complexity. The span at D884 to T894 shows a compositional bias: polar residues. Residues R897–Q923 are compositionally biased toward pro residues. R974 carries the omega-N-methylarginine modification. Repeat copies occupy residues P977–Q978, A979–Q980, A981–Q982, P983–Q984, P985–Q986, P987–Q988, P989–Q990, P991–Q992, P993–Q994, P995–Q996, P997–Q998, P999–Q1000, P1001–Q1002, P1003–Q1004, S1005–Q1006, S1007–Q1008, P1009–Q1010, P1011–Q1012, P1013–Q1014, P1015–Q1016, and P1017–Q1018. A 21 X 2 AA approximate tandem repeats of P-Q region spans residues P977–Q1018. Over residues Q984–Q1002 the composition is skewed to pro residues. 2 stretches are compositionally biased toward pro residues: residues F1093 to H1102 and G1127 to C1165. 2 positions are modified to phosphoserine: S1178 and S1179. T1187 carries the phosphothreonine modification. A Tyrosine-protein phosphatase domain is found at D1248–H1508. C1448 (phosphocysteine intermediate) is an active-site residue. The disordered stretch occupies residues A1574 to S1638. The span at S1598 to P1612 shows a compositional bias: pro residues. Positions V1620–S1638 are enriched in low complexity. Omega-N-methylarginine is present on R1671.

It belongs to the protein-tyrosine phosphatase family. Non-receptor class subfamily. Interacts with GRAP2 and GRB2. Interacts with UBAP1 and CHMP4B.

The protein resides in the nucleus. Its subcellular location is the cytoplasm. It is found in the cytoplasmic vesicle. It localises to the endosome. The protein localises to the cytoskeleton. The protein resides in the cilium basal body. The enzyme catalyses O-phospho-L-tyrosyl-[protein] + H2O = L-tyrosyl-[protein] + phosphate. Functionally, plays a role in sorting of endocytic ubiquitinated cargos into multivesicular bodies (MVBs) via its interaction with the ESCRT-I complex (endosomal sorting complex required for transport I), and possibly also other ESCRT complexes. May act as a negative regulator of Ras-mediated mitogenic activity. Plays a role in ciliogenesis. This chain is Tyrosine-protein phosphatase non-receptor type 23 (Ptpn23), found in Mus musculus (Mouse).